The following is a 413-amino-acid chain: Alpha-1-antitrypsin 1-4 (413 aa).

The N-terminal stretch at 1–24 (MTPSISWSLLLLAGLCCLVPSFLA) is a signal peptide. N-linked (GlcNAc...) asparagine glycans are attached at residues asparagine 64, asparagine 101, and asparagine 265. Residues 368 to 387 (AATVLQVATYSMPPIVRFDH) are RCL.

The protein belongs to the serpin family.

Its subcellular location is the secreted. Functionally, inhibitor of serine proteases. Can inhibit trypsin and chymotrypsin; relatively ineffective against elastase. This Mus musculus (Mouse) protein is Alpha-1-antitrypsin 1-4 (Serpina1d).